The following is a 332-amino-acid chain: Methionine synthase (332 aa).

3 residues coordinate Zn(2+): His-211, Cys-213, and Cys-296.

It belongs to the archaeal MetE family. The cofactor is Zn(2+).

It functions in the pathway amino-acid biosynthesis; L-methionine biosynthesis via de novo pathway. Catalyzes the transfer of a methyl group to L-homocysteine resulting in methionine formation. The physiological methyl donor is unknown. This chain is Methionine synthase, found in Saccharolobus solfataricus (strain ATCC 35092 / DSM 1617 / JCM 11322 / P2) (Sulfolobus solfataricus).